The sequence spans 899 residues: MKTDFKFSNLLGTVYCQGNLLFSPDGTHLFSPVGNRVTVFNLVDNKSYTLPFSHRKNIARIGLTPQGNLLLSIDEDGQAILTNVPRRVVLYHFSFKAPVTALSFSPSGRHFIVGLGRKIEVWHVPSTPDANADGELEFAPFVKHHTHVQHFDDVRHIEWSHDSRFFLTSSKDLTARIWSVDQEEGFTPTVLSGHRQGVVGAWFSKDQETIYTVSKDGAVFDWQYVAKPGQDEDMVDDDDLAWRIVNKHYFMQNSATVRCAAFHPESNLLVAGFSNGIFGLYEMPDFNMIHTLSISQNEIDFVTINKSGEWLAFGASKLGQLLVWEWQSESYILKQQGHFDSMNSLVYSPDGQRIVTVADDGKIKVWDTESGFCIVTFTEHTSGITACEFSKKGNVLFTSSLDGSIRAWDLIRYRNFRTFTAPERLSFSCMAVDPSGEIVAAGSVDSFDIHIWSVQTGQLLDRLSGHEGPVSSLAFAPNGGLLVSGSWDRTARIWSIFNRTQTSEPLQLNSDVLDIAFRPDSLQIAISTLDGNLSFWSVSEAEQQAGLDGRRDVSGGRKIGDRRTAANVAGTKAFNTIRYSTDGSCLLAGGNSKYICLYSVTTMVLLKKYTVSVNLSIQGTQEFLNSKLLTEAGPQGLLDEQGEASDFEDRIDRSLPGSKRGDPSARRKNPEVRVNGVAFSPNGSAFCAASTEGLLIYSLDTTIQFDPFDLNMEITPTSTLAVLEKEKDYLKALVMAFRLNEAGLIQRVFQAIPYTDIPLVVEQFPNVYVARLLRYVAAQTEQSPHVEFCLLWIKALVDKHGAWLSANRGKVDVELRVVARAVSKMRDEIRKLADENVYMVDYLLGQASAAKETNTTKTLALEWATTGSDEQPGAGGMSLNDVMQQDEGNASEDEWIGLV.

WD repeat units lie at residues 9-52, 53-92, 94-132, 149-188, 193-232, 252-291, 294-334, 337-376, 379-418, 422-464, 465-504, 507-546, and 569-608; these read NLLG…TLPF, SHRKNIARIGLTPQGNLLLSIDEDGQAILTNVPRRVVLYH, SFKAPVTALSFSPSGRHFIVGLGRKIEVWHVPSTPDANA, QHFDDVRHIEWSHDSRFFLTSSKDLTARIWSVDQEEGFTP, GHRQGVVGAWFSKDQETIYTVSKDGAVFDWQYVAKPGQDE, QNSATVRCAAFHPESNLLVAGFSNGIFGLYEMPDFNMIHT, ISQN…YILK, GHFDSMNSLVYSPDGQRIVTVADDGKIKVWDTESGFCIVT, EHTSGITACEFSKKGNVLFTSSLDGSIRAWDLIRYRNFRT, PERL…DRLS, GHEGPVSSLAFAPNGGLLVSGSWDRTARIWSIFNRTQTSE, QLNSDVLDIAFRPDSLQIAISTLDGNLSFWSVSEAEQQAG, and AGTKAFNTIRYSTDGSCLLAGGNSKYICLYSVTTMVLLKK. Residues 639–668 form a disordered region; that stretch reads DEQGEASDFEDRIDRSLPGSKRGDPSARRK. Residues 647–668 show a composition bias toward basic and acidic residues; that stretch reads FEDRIDRSLPGSKRGDPSARRK. The stretch at 669–709 is one WD 14 repeat; sequence NPEVRVNGVAFSPNGSAFCAASTEGLLIYSLDTTIQFDPFD. Residues 866–899 form a disordered region; it reads TGSDEQPGAGGMSLNDVMQQDEGNASEDEWIGLV. Residues 889-899 show a composition bias toward acidic residues; the sequence is NASEDEWIGLV.

The protein belongs to the WD repeat PWP2 family.

The chain is Periodic tryptophan protein 2 homolog from Neurospora crassa (strain ATCC 24698 / 74-OR23-1A / CBS 708.71 / DSM 1257 / FGSC 987).